The sequence spans 398 residues: Elongation factor Tu (398 aa).

A tr-type G domain is found at 10–207 (KPHVNIGTIG…TVDEYIPEPE (198 aa)). Residues 19–26 (GHVDHGKT) are G1. Residue 19-26 (GHVDHGKT) participates in GTP binding. Mg(2+) is bound at residue Thr-26. Positions 63-67 (GITIN) are G2. Residues 84-87 (DAPG) are G3. Residues 84 to 88 (DAPGH) and 139 to 142 (NKVD) each bind GTP. Positions 139-142 (NKVD) are G4. The tract at residues 177–179 (SAL) is G5.

This sequence belongs to the TRAFAC class translation factor GTPase superfamily. Classic translation factor GTPase family. EF-Tu/EF-1A subfamily. As to quaternary structure, monomer.

It localises to the cytoplasm. The enzyme catalyses GTP + H2O = GDP + phosphate + H(+). Functionally, GTP hydrolase that promotes the GTP-dependent binding of aminoacyl-tRNA to the A-site of ribosomes during protein biosynthesis. The polypeptide is Elongation factor Tu (Streptococcus agalactiae serotype Ia (strain ATCC 27591 / A909 / CDC SS700)).